A 577-amino-acid polypeptide reads, in one-letter code: Arginine--tRNA ligase (577 aa).

A 'HIGH' region motif is present at residues Pro123–His133.

Belongs to the class-I aminoacyl-tRNA synthetase family. In terms of assembly, monomer.

It localises to the cytoplasm. The catalysed reaction is tRNA(Arg) + L-arginine + ATP = L-arginyl-tRNA(Arg) + AMP + diphosphate. This chain is Arginine--tRNA ligase, found in Cronobacter sakazakii (strain ATCC BAA-894) (Enterobacter sakazakii).